A 44-amino-acid chain; its full sequence is Viresin (44 aa).

This sequence belongs to the insect A10/OS-D protein family.

Its subcellular location is the secreted. Has antibacterial activity against the Gram-negative bacteria E.coli and E.cloacae, but not against the Gram-negative bacteria P.aeruginosa, P.vulgaris, K.pneumoniae and S.enteritidis or the Gram-positive bacteria S.aureus, S.epidermidis and S.salivarius. In Heliothis virescens (Tobacco budworm moth), this protein is Viresin.